The primary structure comprises 287 residues: Cell division protein ZipA (287 aa).

Position 1 (methionine 1) is a topological domain, periplasmic. Residues 2-22 (EIGLREWLIVIGIIVIAGILF) form a helical membrane-spanning segment. The Cytoplasmic portion of the chain corresponds to 23-287 (DGWRRMRGSK…ERRALTQRRG (265 aa)). Residues 48 to 140 (DEEETTSAEV…PTQRITEDKD (93 aa)) form a disordered region. 3 stretches are compositionally biased toward basic and acidic residues: residues 64–77 (LDTH…EHDL), 85–104 (REGK…KDEP), and 121–140 (GRDD…EDKD).

The protein belongs to the ZipA family. As to quaternary structure, interacts with FtsZ via their C-terminal domains.

Its subcellular location is the cell inner membrane. In terms of biological role, essential cell division protein that stabilizes the FtsZ protofilaments by cross-linking them and that serves as a cytoplasmic membrane anchor for the Z ring. Also required for the recruitment to the septal ring of downstream cell division proteins. In Pseudomonas syringae pv. syringae (strain B728a), this protein is Cell division protein ZipA.